A 261-amino-acid polypeptide reads, in one-letter code: (S)-ureidoglycine aminohydrolase (261 aa).

The region spanning 184–230 is the Cupin type-2 domain; that stretch reads LSFAPGASHGYIETHVQEHGAYILSGQGVYNLDNNWIPVKKGDYIFM. The Mn(2+) site is built by Glu-196, His-198, His-202, and Gln-236. Glu-196 contributes to the substrate binding site. Substrate-binding residues include Gln-236, Tyr-249, and Lys-253.

Belongs to the UGHY family. Monomer. Mn(2+) serves as cofactor.

Its subcellular location is the cytoplasm. The catalysed reaction is (S)-2-ureidoglycine + H2O = (S)-ureidoglycolate + NH4(+). Involved in the anaerobic nitrogen utilization via the assimilation of allantoin. Catalyzes the second stereospecific hydrolysis reaction (deamination) of the allantoin degradation pathway, producing S-ureidoglycolate and ammonia from S-ureidoglycine. This is (S)-ureidoglycine aminohydrolase (allE) from Escherichia coli (strain K12).